The chain runs to 348 residues: tRNA N6-adenosine threonylcarbamoyltransferase (348 aa).

2 residues coordinate Fe cation: H116 and H120. Substrate contacts are provided by residues 138-142 (QVSGG), D171, G184, D188, and N277. D309 contacts Fe cation.

It belongs to the KAE1 / TsaD family. Requires Fe(2+) as cofactor.

It localises to the cytoplasm. It catalyses the reaction L-threonylcarbamoyladenylate + adenosine(37) in tRNA = N(6)-L-threonylcarbamoyladenosine(37) in tRNA + AMP + H(+). Required for the formation of a threonylcarbamoyl group on adenosine at position 37 (t(6)A37) in tRNAs that read codons beginning with adenine. Is involved in the transfer of the threonylcarbamoyl moiety of threonylcarbamoyl-AMP (TC-AMP) to the N6 group of A37, together with TsaE and TsaB. TsaD likely plays a direct catalytic role in this reaction. This is tRNA N6-adenosine threonylcarbamoyltransferase from Lactobacillus johnsonii (strain CNCM I-12250 / La1 / NCC 533).